Consider the following 171-residue polypeptide: S-ribosylhomocysteine lyase (171 aa).

Residues His-54, His-58, and Cys-128 each coordinate Fe cation.

The protein belongs to the LuxS family. Homodimer. Fe cation serves as cofactor.

The enzyme catalyses S-(5-deoxy-D-ribos-5-yl)-L-homocysteine = (S)-4,5-dihydroxypentane-2,3-dione + L-homocysteine. In terms of biological role, involved in the synthesis of autoinducer 2 (AI-2) which is secreted by bacteria and is used to communicate both the cell density and the metabolic potential of the environment. The regulation of gene expression in response to changes in cell density is called quorum sensing. Catalyzes the transformation of S-ribosylhomocysteine (RHC) to homocysteine (HC) and 4,5-dihydroxy-2,3-pentadione (DPD). In Edwardsiella ictaluri (strain 93-146), this protein is S-ribosylhomocysteine lyase.